The sequence spans 408 residues: S-adenosylmethionine:tRNA ribosyltransferase-isomerase (408 aa).

The protein belongs to the QueA family. As to quaternary structure, monomer.

Its subcellular location is the cytoplasm. It catalyses the reaction 7-aminomethyl-7-carbaguanosine(34) in tRNA + S-adenosyl-L-methionine = epoxyqueuosine(34) in tRNA + adenine + L-methionine + 2 H(+). It functions in the pathway tRNA modification; tRNA-queuosine biosynthesis. Functionally, transfers and isomerizes the ribose moiety from AdoMet to the 7-aminomethyl group of 7-deazaguanine (preQ1-tRNA) to give epoxyqueuosine (oQ-tRNA). This chain is S-adenosylmethionine:tRNA ribosyltransferase-isomerase, found in Trichormus variabilis (strain ATCC 29413 / PCC 7937) (Anabaena variabilis).